The chain runs to 229 residues: Cytosolic-abundant heat soluble protein 107838 (229 aa).

The disordered stretch occupies residues 1–29 (MSAEAMNMNMNQDAVFIPPPEGEQYERKE). A coiled-coil region spans residues 109–145 (LSANYQKEVERKTEAYRKQQEVEADKIRKELEKQHLR). CAHS motif stretches follow at residues 124–142 (YRKQ…LEKQ) and 161–179 (QKKM…MDRE). A compositionally biased stretch (polar residues) spans 202–218 (SSAAGTETGGQVVSESQ). Residues 202-229 (SSAAGTETGGQVVSESQKFTERNRQIKQ) form a disordered region. Residues 219–229 (KFTERNRQIKQ) are compositionally biased toward basic and acidic residues.

It belongs to the Cytosolic-abundant heat soluble protein (CAHS) family.

It localises to the cytoplasm. In terms of biological role, CAHS proteins are cytosolic heat soluble proteins that seem to contribute to the anhydrobiosis in tardigrades, but their specific mechanisms are yet to be identified. It is possible that protection during anhydrobiosis might occur via the stabilization of vitrifying small molecules such as sugars, but not via the direct glass transition of CAHS proteins themselves. This is Cytosolic-abundant heat soluble protein 107838 from Paramacrobiotus richtersi (Water bear).